The chain runs to 148 residues: Snaclec stejaggregin-A subunit beta-3 (148 aa).

The N-terminal stretch at 1 to 23 (MGRFISVSFGLLVVFLSLSGAGA) is a signal peptide. C27 and C38 are oxidised to a cystine. Residues 34 to 145 (YDLYCYKVFK…CSRTHYVVCK (112 aa)) form the C-type lectin domain. N-linked (GlcNAc...) asparagine glycans are attached at residues N47 and N78. Disulfide bonds link C55/C144 and C121/C136.

This sequence belongs to the snaclec family. As to quaternary structure, heteromultimer; disulfide-linked. In terms of tissue distribution, expressed by the venom gland.

It is found in the secreted. Interferes with one step of hemostasis (modulation of platelet aggregation, or coagulation cascade, for example). This Trimeresurus stejnegeri (Chinese green tree viper) protein is Snaclec stejaggregin-A subunit beta-3.